We begin with the raw amino-acid sequence, 273 residues long: 2,3,4,5-tetrahydropyridine-2,6-dicarboxylate N-succinyltransferase (273 aa).

The substrate site is built by arginine 104 and aspartate 141.

This sequence belongs to the transferase hexapeptide repeat family. In terms of assembly, homotrimer.

It localises to the cytoplasm. It carries out the reaction (S)-2,3,4,5-tetrahydrodipicolinate + succinyl-CoA + H2O = (S)-2-succinylamino-6-oxoheptanedioate + CoA. The protein operates within amino-acid biosynthesis; L-lysine biosynthesis via DAP pathway; LL-2,6-diaminopimelate from (S)-tetrahydrodipicolinate (succinylase route): step 1/3. The chain is 2,3,4,5-tetrahydropyridine-2,6-dicarboxylate N-succinyltransferase from Thioalkalivibrio sulfidiphilus (strain HL-EbGR7).